Reading from the N-terminus, the 208-residue chain is Thiamine-phosphate synthase (208 aa).

4-amino-2-methyl-5-(diphosphooxymethyl)pyrimidine contacts are provided by residues 38-42 and N70; that span reads QYRSK. D71 and D90 together coordinate Mg(2+). T109 is a binding site for 4-amino-2-methyl-5-(diphosphooxymethyl)pyrimidine. Residue 136-138 participates in 2-[(2R,5Z)-2-carboxy-4-methylthiazol-5(2H)-ylidene]ethyl phosphate binding; the sequence is SAT. A 4-amino-2-methyl-5-(diphosphooxymethyl)pyrimidine-binding site is contributed by K139. 2-[(2R,5Z)-2-carboxy-4-methylthiazol-5(2H)-ylidene]ethyl phosphate is bound by residues G166 and 186–187; that span reads VS.

It belongs to the thiamine-phosphate synthase family. Mg(2+) serves as cofactor.

It catalyses the reaction 2-[(2R,5Z)-2-carboxy-4-methylthiazol-5(2H)-ylidene]ethyl phosphate + 4-amino-2-methyl-5-(diphosphooxymethyl)pyrimidine + 2 H(+) = thiamine phosphate + CO2 + diphosphate. It carries out the reaction 2-(2-carboxy-4-methylthiazol-5-yl)ethyl phosphate + 4-amino-2-methyl-5-(diphosphooxymethyl)pyrimidine + 2 H(+) = thiamine phosphate + CO2 + diphosphate. The catalysed reaction is 4-methyl-5-(2-phosphooxyethyl)-thiazole + 4-amino-2-methyl-5-(diphosphooxymethyl)pyrimidine + H(+) = thiamine phosphate + diphosphate. It functions in the pathway cofactor biosynthesis; thiamine diphosphate biosynthesis; thiamine phosphate from 4-amino-2-methyl-5-diphosphomethylpyrimidine and 4-methyl-5-(2-phosphoethyl)-thiazole: step 1/1. In terms of biological role, condenses 4-methyl-5-(beta-hydroxyethyl)thiazole monophosphate (THZ-P) and 2-methyl-4-amino-5-hydroxymethyl pyrimidine pyrophosphate (HMP-PP) to form thiamine monophosphate (TMP). The sequence is that of Thiamine-phosphate synthase from Aromatoleum aromaticum (strain DSM 19018 / LMG 30748 / EbN1) (Azoarcus sp. (strain EbN1)).